Here is a 246-residue protein sequence, read N- to C-terminus: Probable transcriptional regulatory protein CLK_2466 (246 aa).

It belongs to the TACO1 family.

The protein resides in the cytoplasm. This chain is Probable transcriptional regulatory protein CLK_2466, found in Clostridium botulinum (strain Loch Maree / Type A3).